The chain runs to 351 residues: Ceramide hydroxylase (351 aa).

Helical transmembrane passes span 26–46, 47–67, 141–161, and 204–224; these read AAIY…GFLI, AATT…MLAL, GFLF…AILI, and VACW…VVPV.

This sequence belongs to the fatty acid desaturase type 1 family.

Its subcellular location is the cell inner membrane. It participates in lipid metabolism; sphingolipid metabolism. Involved in de novo bacterial ceramide synthesis. The chain is Ceramide hydroxylase from Caulobacter vibrioides (strain NA1000 / CB15N) (Caulobacter crescentus).